The primary structure comprises 475 residues: Ribulose bisphosphate carboxylase large chain (475 aa).

Residues 1-2 (MS) constitute a propeptide that is removed on maturation. N-acetylproline is present on P3. K14 is subject to N6,N6,N6-trimethyllysine. Positions 123 and 173 each coordinate substrate. K175 functions as the Proton acceptor in the catalytic mechanism. K177 serves as a coordination point for substrate. The Mg(2+) site is built by K201, D203, and E204. An N6-carboxylysine modification is found at K201. The active-site Proton acceptor is H294. The substrate site is built by R295, H327, and S379.

It belongs to the RuBisCO large chain family. Type I subfamily. Heterohexadecamer of 8 large chains and 8 small chains; disulfide-linked. The disulfide link is formed within the large subunit homodimers. Requires Mg(2+) as cofactor. Post-translationally, the disulfide bond which can form in the large chain dimeric partners within the hexadecamer appears to be associated with oxidative stress and protein turnover.

It localises to the plastid. The protein resides in the chloroplast. The enzyme catalyses 2 (2R)-3-phosphoglycerate + 2 H(+) = D-ribulose 1,5-bisphosphate + CO2 + H2O. It carries out the reaction D-ribulose 1,5-bisphosphate + O2 = 2-phosphoglycolate + (2R)-3-phosphoglycerate + 2 H(+). RuBisCO catalyzes two reactions: the carboxylation of D-ribulose 1,5-bisphosphate, the primary event in carbon dioxide fixation, as well as the oxidative fragmentation of the pentose substrate in the photorespiration process. Both reactions occur simultaneously and in competition at the same active site. This Piper cenocladum (Ant piper) protein is Ribulose bisphosphate carboxylase large chain.